The chain runs to 484 residues: Aldehyde dehydrogenase family 3 member H1 (484 aa).

196–201 is an NAD(+) binding site; the sequence is GSSKIG. The active-site Proton acceptor is glutamate 218. The active-site Nucleophile is cysteine 253.

It belongs to the aldehyde dehydrogenase family. Homodimer and homomultimer. As to expression, isoform alpha is expressed in expanded leaves and flowers. Detected in seedlings. Isoform beta is mainly expressed in flowers. Detected in leaves and seedlings.

The catalysed reaction is an aldehyde + NAD(+) + H2O = a carboxylate + NADH + 2 H(+). Thiol-based regulation. Inactivation after dimerization under oxidizing conditions. Involved in oxidative stress tolerance by detoxifying reactive aldehydes derived from lipid peroxidation. Medium- to long-chain saturated aldehydes are preferred substrates, while the short-chain aldehyde propanal is a weak substrate. Is strictely NAD(+) specific. The protein is Aldehyde dehydrogenase family 3 member H1 (ALDH3H1) of Arabidopsis thaliana (Mouse-ear cress).